Here is a 410-residue protein sequence, read N- to C-terminus: F-box protein At3g19890 (410 aa).

The F-box domain maps to 2–49; it reads TMISDLSKDLVEEILSKAPITSLGAVRSTHKQWNALSKGRLLYKAEAK. Positions 386–410 are disordered; that stretch reads EDKCKSIKMVDTKRQRKKRKRKSKR. Over residues 387–398 the composition is skewed to basic and acidic residues; it reads DKCKSIKMVDTK. Basic residues predominate over residues 399 to 410; that stretch reads RQRKKRKRKSKR.

In Arabidopsis thaliana (Mouse-ear cress), this protein is F-box protein At3g19890.